The following is a 309-amino-acid chain: Formamidopyrimidine-DNA glycosylase (309 aa).

The active-site Schiff-base intermediate with DNA is the P2. E3 serves as the catalytic Proton donor. K56 functions as the Proton donor; for beta-elimination activity in the catalytic mechanism. Residues H106 and R129 each coordinate DNA. An FPG-type zinc finger spans residues 271–305 (NVYGRQGNACPHCESTLENIKLNGRASVYCPLCQP). Catalysis depends on R295, which acts as the Proton donor; for delta-elimination activity.

It belongs to the FPG family. As to quaternary structure, monomer. Zn(2+) is required as a cofactor.

The enzyme catalyses Hydrolysis of DNA containing ring-opened 7-methylguanine residues, releasing 2,6-diamino-4-hydroxy-5-(N-methyl)formamidopyrimidine.. It carries out the reaction 2'-deoxyribonucleotide-(2'-deoxyribose 5'-phosphate)-2'-deoxyribonucleotide-DNA = a 3'-end 2'-deoxyribonucleotide-(2,3-dehydro-2,3-deoxyribose 5'-phosphate)-DNA + a 5'-end 5'-phospho-2'-deoxyribonucleoside-DNA + H(+). Functionally, involved in base excision repair of DNA damaged by oxidation or by mutagenic agents. Acts as a DNA glycosylase that recognizes and removes damaged bases. Has a preference for oxidized purines, such as 7,8-dihydro-8-oxoguanine (8-oxoG). Has AP (apurinic/apyrimidinic) lyase activity and introduces nicks in the DNA strand. Cleaves the DNA backbone by beta-delta elimination to generate a single-strand break at the site of the removed base with both 3'- and 5'-phosphates. In Psychrobacter arcticus (strain DSM 17307 / VKM B-2377 / 273-4), this protein is Formamidopyrimidine-DNA glycosylase.